We begin with the raw amino-acid sequence, 402 residues long: Chorismate synthase (402 aa).

The NADP(+) site is built by Arg-40 and Arg-46. Residues 134 to 136 (RAS), 255 to 256 (QA), Gly-299, 314 to 318 (KPIAT), and Arg-340 contribute to the FMN site.

This sequence belongs to the chorismate synthase family. Homotetramer. The cofactor is FMNH2.

It catalyses the reaction 5-O-(1-carboxyvinyl)-3-phosphoshikimate = chorismate + phosphate. Its pathway is metabolic intermediate biosynthesis; chorismate biosynthesis; chorismate from D-erythrose 4-phosphate and phosphoenolpyruvate: step 7/7. In terms of biological role, catalyzes the anti-1,4-elimination of the C-3 phosphate and the C-6 proR hydrogen from 5-enolpyruvylshikimate-3-phosphate (EPSP) to yield chorismate, which is the branch point compound that serves as the starting substrate for the three terminal pathways of aromatic amino acid biosynthesis. This reaction introduces a second double bond into the aromatic ring system. This is Chorismate synthase from Leifsonia xyli subsp. xyli (strain CTCB07).